The following is an 85-amino-acid chain: Small ribosomal subunit protein bS18 (85 aa).

This sequence belongs to the bacterial ribosomal protein bS18 family. In terms of assembly, part of the 30S ribosomal subunit. Forms a tight heterodimer with protein bS6.

Its function is as follows. Binds as a heterodimer with protein bS6 to the central domain of the 16S rRNA, where it helps stabilize the platform of the 30S subunit. The polypeptide is Small ribosomal subunit protein bS18 (Hamiltonella defensa subsp. Acyrthosiphon pisum (strain 5AT)).